Consider the following 549-residue polypeptide: MARDAAKLEATVAKLKKHWAESAPRDMRAAFSADPGRFGRYSLCLDDLLFDWSKCRVNDETMALLKELAVAADVEGRRAAMFAGEHINNTEDRAVLHVALRDTSSKEVLVDGHNVLPDVKHVLDRMAAFADGIRSGALKGATGRKITDIVNIGIGGSDLGPVMATLALAPYHDGPRAHFVSNIDGAHIADTLSPLDPASTLIIVASKTFTTIETMTNAQTARKWVADTLGEAAVGAHFAAVSTALDKVAAFGIPEDRVFGFWDWVGGRYSVWSAIGLPVMIAVGPDNFRKFLAGAHAMDVHFRDAPLEKNLPVMLGLIGYWHRAICGYGSRAIIPYDQRLSRLPAYLQQLDMESNGKSVTLDGKPVSGPTGPVVWGEPGTNGQHAFFQLLHQGTDTIPLEFIVAAKGHEPTLDHQHEMLMANCLAQSEALMKGRTLDEARAQLQAKNLPASQVERIAPHRVFSGNRPSLTLIHDMLDPYALGRLIALYEHRVFVEAQIFGINAFDQWGVELGKELATELLPVVSGKEGASGRDASTQGLVAHLHARRKA.

Residue Glu353 is the Proton donor of the active site. Residues His384 and Lys513 contribute to the active site.

Belongs to the GPI family.

The protein localises to the cytoplasm. It catalyses the reaction alpha-D-glucose 6-phosphate = beta-D-fructose 6-phosphate. It functions in the pathway carbohydrate biosynthesis; gluconeogenesis. It participates in carbohydrate degradation; glycolysis; D-glyceraldehyde 3-phosphate and glycerone phosphate from D-glucose: step 2/4. Functionally, catalyzes the reversible isomerization of glucose-6-phosphate to fructose-6-phosphate. The polypeptide is Glucose-6-phosphate isomerase (Brucella ovis (strain ATCC 25840 / 63/290 / NCTC 10512)).